We begin with the raw amino-acid sequence, 101 residues long: Small ribosomal subunit protein uS14 (101 aa).

It belongs to the universal ribosomal protein uS14 family. As to quaternary structure, part of the 30S ribosomal subunit. Contacts proteins S3 and S10.

In terms of biological role, binds 16S rRNA, required for the assembly of 30S particles and may also be responsible for determining the conformation of the 16S rRNA at the A site. This is Small ribosomal subunit protein uS14 from Cupriavidus necator (strain ATCC 17699 / DSM 428 / KCTC 22496 / NCIMB 10442 / H16 / Stanier 337) (Ralstonia eutropha).